Reading from the N-terminus, the 84-residue chain is Large ribosomal subunit protein bL31B (84 aa).

It belongs to the bacterial ribosomal protein bL31 family. Type B subfamily. Part of the 50S ribosomal subunit.

The chain is Large ribosomal subunit protein bL31B from Parabacteroides distasonis (strain ATCC 8503 / DSM 20701 / CIP 104284 / JCM 5825 / NCTC 11152).